The chain runs to 807 residues: Carbamoyltransferase HypF2 (807 aa).

The Acylphosphatase-like domain maps to 14-101 (RIRIRVRGVV…VDADGFAILE (88 aa)). C4-type zinc fingers lie at residues 120–145 (CPDCLAELFDPANRRYRYAFINCTQC) and 170–195 (CRPCLDEYNAPEHRRFHAEPNACPDC). The 204-residue stretch at 212–415 (VDPIAETVAR…HVQFIRRARG (204 aa)) folds into the YrdC-like domain. A disordered region spans residues 663–682 (WGEQPSPGRPKTVAHSLGGV).

This sequence belongs to the carbamoyltransferase HypF family.

It catalyses the reaction C-terminal L-cysteinyl-[HypE protein] + carbamoyl phosphate + ATP + H2O = C-terminal S-carboxamide-L-cysteinyl-[HypE protein] + AMP + phosphate + diphosphate + H(+). It participates in protein modification; [NiFe] hydrogenase maturation. In terms of biological role, involved in the maturation of [NiFe] hydrogenases. Along with HypE, it catalyzes the synthesis of the CN ligands of the active site iron of [NiFe]-hydrogenases. HypF functions as a carbamoyl transferase using carbamoylphosphate as a substrate and transferring the carboxamido moiety in an ATP-dependent reaction to the thiolate of the C-terminal cysteine of HypE yielding a protein-S-carboxamide. The chain is Carbamoyltransferase HypF2 (hypF2) from Cupriavidus necator (strain ATCC 17699 / DSM 428 / KCTC 22496 / NCIMB 10442 / H16 / Stanier 337) (Ralstonia eutropha).